The chain runs to 449 residues: Phosphoglucosamine mutase (449 aa).

The Phosphoserine intermediate role is filled by S101. Mg(2+) is bound by residues S101, D240, D242, and D244. Position 101 is a phosphoserine (S101).

This sequence belongs to the phosphohexose mutase family. Mg(2+) serves as cofactor. Post-translationally, activated by phosphorylation.

It catalyses the reaction alpha-D-glucosamine 1-phosphate = D-glucosamine 6-phosphate. Functionally, catalyzes the conversion of glucosamine-6-phosphate to glucosamine-1-phosphate. In Streptococcus suis (strain 98HAH33), this protein is Phosphoglucosamine mutase.